A 247-amino-acid chain; its full sequence is PF03932 family protein CutC (247 aa).

This sequence belongs to the CutC family.

Its subcellular location is the cytoplasm. The chain is PF03932 family protein CutC from Vibrio parahaemolyticus serotype O3:K6 (strain RIMD 2210633).